The chain runs to 320 residues: 7-acetyl-epi-neemfruitin B aldo-keto reductase (320 aa).

NADP(+) is bound at residue aspartate 51. Tyrosine 56 acts as the Proton donor in catalysis. Residues glutamine 186 and 264–272 (FNKQRMEEN) each bind NADP(+).

It belongs to the aldo/keto reductase family. Mainly expressed in petioles and, to a lower extent, in roots.

It catalyses the reaction 7-acetyl-epi-neemfruitin B + AH2 + H2O = (1S,3bR,4R,5aR,9aR,9bR,11aS)-1-[(4R)-5-[(2S)-3,3-dimethyloxiran-2-yl]-1,4-dihydroxybutan-2-yl]-3b,6,6,9a,11a-pentamethyl-7-oxo-1H,2H,3bH,4H,5H,5aH,6H,7H,9aH,9bH,10H,11H,11aH-cyclopenta[a]phenanthren-4-yl acetate + acetate + A + H(+). The protein operates within secondary metabolite biosynthesis; terpenoid biosynthesis. Aldo-keto reductase involved in the biosynthesis of limonoids triterpene natural products such as azadirachtin, an antifeedant widely used as bioinsecticide, and possessing many medicinal applications including anti-tumoral, anti-malarial, anti-rheumatic, antibacterial, anti-inflammatory, anti-pyretic and diuretic effects. Can use 7-acetyl-epi-neemfruitin B as substrate. The sequence is that of 7-acetyl-epi-neemfruitin B aldo-keto reductase from Melia azedarach (Chinaberry tree).